The sequence spans 205 residues: Putative protein phosphatase inhibitor 2-like protein 1 (205 aa).

Disordered regions lie at residues 1–44 (MAAS…SKKS), 64–92 (GLMK…TETT), 107–148 (AEGL…TLHY), and 171–205 (VEEM…SRSS). Required for binding PPP1CC stretches follow at residues 12–17 (KGILKD) and 43–55 (KSQK…ILAT). The segment covering 17–26 (DNTSTTSSMV) has biased composition (polar residues). Residues 30-44 (EHPRGSVHEQLSKKS) show a composition bias toward basic and acidic residues. Threonine 73 carries the post-translational modification Phosphothreonine; by GSK3. 2 stretches are compositionally biased toward acidic residues: residues 80–91 (GDDEDACSDTET) and 121–130 (SSGEEDSDLS). Serine 87 carries the phosphoserine; by CK2 modification. Residues 131 to 144 (PEEREKKRQFEMRR) show a composition bias toward basic and acidic residues. Residues 147–150 (HYNE) form a required for binding PPP1CC catalytic center, displacing metal ions and inhibition of PPP1CC catalytic activity region. A compositionally biased stretch (polar residues) spans 182–205 (SMNTEESNQGSTASDQQQNKSRSS).

Belongs to the protein phosphatase inhibitor 2 family.

In terms of biological role, inhibitor of protein-phosphatase 1. This Homo sapiens (Human) protein is Putative protein phosphatase inhibitor 2-like protein 1 (PPP1R2P1).